A 179-amino-acid chain; its full sequence is Large ribosomal subunit protein uL5 (179 aa).

Belongs to the universal ribosomal protein uL5 family. As to quaternary structure, part of the 50S ribosomal subunit; part of the 5S rRNA/L5/L18/L25 subcomplex. Contacts the 5S rRNA and the P site tRNA. Forms a bridge to the 30S subunit in the 70S ribosome.

Its function is as follows. This is one of the proteins that bind and probably mediate the attachment of the 5S RNA into the large ribosomal subunit, where it forms part of the central protuberance. In the 70S ribosome it contacts protein S13 of the 30S subunit (bridge B1b), connecting the 2 subunits; this bridge is implicated in subunit movement. Contacts the P site tRNA; the 5S rRNA and some of its associated proteins might help stabilize positioning of ribosome-bound tRNAs. The polypeptide is Large ribosomal subunit protein uL5 (Shewanella pealeana (strain ATCC 700345 / ANG-SQ1)).